The sequence spans 1071 residues: Exportin-1 (1071 aa).

Residues 1-679 (MPAIMTMLAD…QQATKNVDIL (679 aa)) are necessary for HTLV-1 Rex-mediated mRNA export. The 67-residue stretch at 46-112 (AQEVLTHLKE…KKYVVGLIIK (67 aa)) folds into the Importin N-terminal domain. 6 HEAT repeats span residues 217–240 (QNAPLVHATLETLLRFLNWIPLGY), 241–277 (IFETKLISTLIYKFLNVPMFRNVSLKCLTEIAGVSVS), 354–472 (MLLV…YVDT), 515–553 (RFLVTVIKDLLGLCEQKRGKDNKAIIASNIMYIVGQYPR), 560–597 (KFLKTVVNKLFEFMHETHDGVQDMACDTFIKIAQKCRR), and 602–639 (VQVGEVMPFIDEILNNINTIICDLQPQQVHTFYEAVGY). The segment at 327-450 (CTFLKEHDQL…VREFMKDTDS (124 aa)) is interaction with Ran and nuclear export complex formation. Position 391 is a phosphoserine (serine 391). The tract at residues 411–414 (PMLF) is necessary for HTLV-1 Rex multimerization. Residues 411-481 (PMLFKVRLLM…TERIMTEKLH (71 aa)) are interaction with RANBP3. At lysine 446 the chain carries N6-acetyllysine. Threonine 448 is modified (phosphothreonine). Serine 450 is modified (phosphoserine). Residue tyrosine 454 is modified to Phosphotyrosine. Position 693 is an N6-acetyllysine (lysine 693). HEAT repeat units lie at residues 775-813 (NFVPPLLDAVLIDYQRNVPAAREPEVLSTMAIIVNKLGG), 885-916 (TMRNVADTGLQILFTLLQNVAQEEAAAQSFYQ), 917-954 (TYFCDILQHIFSVVTDTSHTAGLTMHASILAYMFNLVE), and 1002-1039 (FSLNQDIPAFKEHLRDFLVQIKEFAGEDTSDLFLEERE). Positions 800–820 (VLSTMAIIVNKLGGHITAEIP) are interaction with HIV-1 Rev. A Phosphoserine modification is found at serine 1031.

Belongs to the exportin family. In terms of assembly, found in a U snRNA export complex with PHAX/RNUXA, NCBP1/CBP80, NCBP2/CBP20, RAN, XPO1 and m7G-capped RNA. Component of a nuclear export receptor complex composed of KPNB1, RAN, SNUPN and XPO1. Found in a trimeric export complex with SNUPN, RAN and XPO1. Found in a nuclear export complex with RANBP3 and RAN. Found in a 60S ribosomal subunit export complex with NMD3, RAN, XPO1. Interacts with DDX3X, NMD3, NUP42, NUP88, NUP214, RANBP3 and TERT. Interacts with NEMF (via its N-terminus). Interacts with the monomeric form of BIRC5/survivin deacetylated at 'Lys-129'. Interacts with DTNBP1 and SERTAD2; the interactions translocate DTNBP1 and SERTAD2 out of the nucleus. Interacts with ATF2. Interacts with SLC35G1 and STIM1. Interacts with DCAF8. Interacts with CPEB3. Interacts with HAX1. Interacts with BOK; translocates to the cytoplasm. Interacts with HSP90AB1. Interacts with LRPPRC; interacts with LRPPRC alone and also when LRPPRC is in complex with EIF4E and with EIF4E sensitivity element (4ESE)-containing mRNAs to form an EIF4E-dependent mRNA export complex. (Microbial infection) Interacts with HIV-1 Rev. As to quaternary structure, (Microbial infection) Interacts with HTLV-1 Rex. In terms of assembly, (Microbial infection) Interacts with influenza A nucleoprotein. (Microbial infection) Interacts with Epstein-Barr virus protein BMLF1. As to quaternary structure, (Microbial infection) Part of a tetrameric complex composed of CRM1, importin alpha/beta dimer and the Venezuelan equine encephalitis virus (VEEV) capsid; this complex blocks the receptor-mediated transport through the nuclear pore. In terms of assembly, (Microbial infection) Interacts with SARS-CoV virus protein ORF9b; this interaction mediates protein ORF9b export out of the nucleus. In terms of tissue distribution, expressed in heart, brain, placenta, lung, liver, skeletal muscle, pancreas, spleen, thymus, prostate, testis, ovary, small intestine, colon and peripheral blood leukocytes. Not expressed in the kidney.

It is found in the cytoplasm. The protein localises to the nucleus. Its subcellular location is the nucleoplasm. It localises to the cajal body. The protein resides in the nucleolus. Functionally, mediates the nuclear export of cellular proteins (cargos) bearing a leucine-rich nuclear export signal (NES) and of RNAs. In the nucleus, in association with RANBP3, binds cooperatively to the NES on its target protein and to the GTPase RAN in its active GTP-bound form (Ran-GTP). Docking of this complex to the nuclear pore complex (NPC) is mediated through binding to nucleoporins. Upon transit of a nuclear export complex into the cytoplasm, disassembling of the complex and hydrolysis of Ran-GTP to Ran-GDP (induced by RANBP1 and RANGAP1, respectively) cause release of the cargo from the export receptor. The directionality of nuclear export is thought to be conferred by an asymmetric distribution of the GTP- and GDP-bound forms of Ran between the cytoplasm and nucleus. Involved in U3 snoRNA transport from Cajal bodies to nucleoli. Binds to late precursor U3 snoRNA bearing a TMG cap. In terms of biological role, (Microbial infection) Mediates the export of unspliced or incompletely spliced RNAs out of the nucleus from different viruses including HIV-1, HTLV-1 and influenza A. Interacts with, and mediates the nuclear export of HIV-1 Rev and HTLV-1 Rex proteins. Involved in HTLV-1 Rex multimerization. In Homo sapiens (Human), this protein is Exportin-1 (XPO1).